The sequence spans 178 residues: Large ribosomal subunit protein uL6 (178 aa).

The protein belongs to the universal ribosomal protein uL6 family. As to quaternary structure, part of the 50S ribosomal subunit.

Functionally, this protein binds to the 23S rRNA, and is important in its secondary structure. It is located near the subunit interface in the base of the L7/L12 stalk, and near the tRNA binding site of the peptidyltransferase center. This is Large ribosomal subunit protein uL6 from Streptococcus mutans serotype c (strain ATCC 700610 / UA159).